The chain runs to 203 residues: Thymidylate kinase (203 aa).

Residue 10–17 (GVEGSGKT) coordinates ATP.

Belongs to the thymidylate kinase family.

The catalysed reaction is dTMP + ATP = dTDP + ADP. Its function is as follows. Phosphorylation of dTMP to form dTDP in both de novo and salvage pathways of dTTP synthesis. This chain is Thymidylate kinase, found in Carboxydothermus hydrogenoformans (strain ATCC BAA-161 / DSM 6008 / Z-2901).